We begin with the raw amino-acid sequence, 292 residues long: ATP synthase gamma chain (292 aa).

Belongs to the ATPase gamma chain family. F-type ATPases have 2 components, CF(1) - the catalytic core - and CF(0) - the membrane proton channel. CF(1) has five subunits: alpha(3), beta(3), gamma(1), delta(1), epsilon(1). CF(0) has three main subunits: a, b and c.

The protein localises to the cell inner membrane. Functionally, produces ATP from ADP in the presence of a proton gradient across the membrane. The gamma chain is believed to be important in regulating ATPase activity and the flow of protons through the CF(0) complex. This Maridesulfovibrio salexigens (strain ATCC 14822 / DSM 2638 / NCIMB 8403 / VKM B-1763) (Desulfovibrio salexigens) protein is ATP synthase gamma chain.